Consider the following 126-residue polypeptide: Large ribosomal subunit protein bL12 (126 aa).

This sequence belongs to the bacterial ribosomal protein bL12 family. Homodimer. Part of the ribosomal stalk of the 50S ribosomal subunit. Forms a multimeric L10(L12)X complex, where L10 forms an elongated spine to which 2 to 4 L12 dimers bind in a sequential fashion. Binds GTP-bound translation factors.

Its function is as follows. Forms part of the ribosomal stalk which helps the ribosome interact with GTP-bound translation factors. Is thus essential for accurate translation. In Rhizorhabdus wittichii (strain DSM 6014 / CCUG 31198 / JCM 15750 / NBRC 105917 / EY 4224 / RW1) (Sphingomonas wittichii), this protein is Large ribosomal subunit protein bL12.